The primary structure comprises 523 residues: MAAVGRVGSFGSSPPGLASTYASGPLANELASGSGGPAAGDDEDGQNLWSRILREVSTRSRSKLPTGKNVLLLGEDGAGKTSLIRRIQGIEEYKKGRGLEYLYLNVHDEDRDDQTRCNVWILDGDLYHKGLLKFSLDALSLRDTLVMLVVDMSKPWTALDSLQKWASVVREHVDKLKIPPEEMKEMEQKLIRDFQEYVEPGEDFPASPQRRATAAQEDRDDSVVLPLGADTLTHNLGLPVLVVCTKCDAISVLEKEHDYRDEHFDFIQSHIRKFCLQYGAALIYTSVKENKNIDLVYKYIVQKLYGFPYKIPAVVVEKDAVFIPAGWDNDKKIGILHENFQTLKIEDNFEDIITKPPVRKFVHEKEIMAEDDQVFLMKLQSLLAKQPPTAAGRPVDASPRVPGGSPRTPNRSVSSNVASVSPIPAGSKKIDPNMKAGATSEGVLANFFNSLLSKKTGSPGGPGVGGSPGGGAAGASTSLPPSAKKSGQKPVLSDVHAELDRITRKPASVSPTTPPSPTEGEAS.

The segment at 1–45 (MAAVGRVGSFGSSPPGLASTYASGPLANELASGSGGPAAGDDEDG) is disordered. Position 74 to 81 (74 to 81 (GEDGAGKT)) interacts with ATP. Residue serine 207 is modified to Phosphoserine. Threonine 213 carries the post-translational modification Phosphothreonine. Disordered stretches follow at residues 387–434 (PPTA…DPNM) and 457–523 (GSPG…GEAS). A phosphoserine mark is found at serine 398 and serine 405. Residue threonine 408 is modified to Phosphothreonine. Phosphoserine is present on residues serine 412, serine 419, serine 421, and serine 427. The segment covering 412–421 (SVSSNVASVS) has biased composition (low complexity). The segment covering 458 to 473 (SPGGPGVGGSPGGGAA) has biased composition (gly residues). Low complexity predominate over residues 474 to 483 (GASTSLPPSA). Phosphoserine occurs at positions 486 and 510. Threonine 512 and threonine 513 each carry phosphothreonine. Position 516 is a phosphoserine (serine 516).

The protein belongs to the dynein light intermediate chain family. In terms of assembly, homodimer. The cytoplasmic dynein 1 complex consists of two catalytic heavy chains (HCs) and a number of non-catalytic subunits presented by intermediate chains (ICs), light intermediate chains (LICs) and light chains (LCs); the composition seems to vary in respect to the IC, LIC and LC composition. The heavy chain homodimer serves as a scaffold for the probable homodimeric assembly of the respective non-catalytic subunits. The ICs and LICs bind directly to the HC dimer and the LCs assemble on the IC dimer. Self-associates. Interacts with DYNC1H1; DYNC1LI1 and DYNC1LI2 bind mutually exclusive to DYNC1H1. Interacts with PCNT. Forms a complex with RAB11FIP3 and RAB11A1; the interaction between DYNC1LI1 and RAB11FIP3 is direct and induces DYNC1LI1 localization onto endosomal membrane; the complex regulates endocytic trafficking. Interacts with RUFY3. Post-translationally, phosphorylated during mitosis but not in interphase.

The protein localises to the cytoplasm. Its subcellular location is the chromosome. It localises to the centromere. It is found in the kinetochore. The protein resides in the cytoskeleton. The protein localises to the spindle pole. Its subcellular location is the recycling endosome membrane. In terms of biological role, acts as one of several non-catalytic accessory components of the cytoplasmic dynein 1 complex that are thought to be involved in linking dynein to cargos and to adapter proteins that regulate dynein function. Cytoplasmic dynein 1 acts as a motor for the intracellular retrograde motility of vesicles and organelles along microtubules. May play a role in binding dynein to membranous organelles or chromosomes. Probably involved in the microtubule-dependent transport of pericentrin. Is required for progress through the spindle assembly checkpoint. The phosphorylated form appears to be involved in the selective removal of MAD1L1 and MAD1L2 but not BUB1B from kinetochores. Forms a functional Rab11/RAB11FIP3/dynein complex onto endosomal membrane that regulates the movement of peripheral sorting endosomes (SE) along microtubule tracks toward the microtubule organizing center/centrosome, generating the endosomal recycling compartment (ERC). This is Cytoplasmic dynein 1 light intermediate chain 1 (Dync1li1) from Rattus norvegicus (Rat).